The primary structure comprises 128 residues: Holo-[acyl-carrier-protein] synthase (128 aa).

Mg(2+) is bound by residues aspartate 8 and glutamate 60.

It belongs to the P-Pant transferase superfamily. AcpS family. Requires Mg(2+) as cofactor.

The protein localises to the cytoplasm. It catalyses the reaction apo-[ACP] + CoA = holo-[ACP] + adenosine 3',5'-bisphosphate + H(+). Its function is as follows. Transfers the 4'-phosphopantetheine moiety from coenzyme A to a Ser of acyl-carrier-protein. The sequence is that of Holo-[acyl-carrier-protein] synthase from Anaeromyxobacter dehalogenans (strain 2CP-1 / ATCC BAA-258).